The primary structure comprises 62 residues: Small polypeptide DEVIL 17 (62 aa).

Residues 27-58 form a required for DVL/RTFL small polypeptide activity region; it reads RRNKGCLAMVKERRSRFYIARRCILMLLCWHK. The chain crosses the membrane as a helical span at residues 39–56; the sequence is RRSRFYIARRCILMLLCW.

Belongs to the DVL/RTFL small polypeptides family.

It is found in the cell membrane. Small polypeptide acting as a regulatory molecule which coordinates cellular responses required for differentiation, growth and development, probably by restricting polar cell proliferation in lateral organs and coordinating socket cell recruitment and differentiation at trichome sites. This is Small polypeptide DEVIL 17 from Arabidopsis thaliana (Mouse-ear cress).